Here is a 280-residue protein sequence, read N- to C-terminus: Movement protein (280 aa).

The segment at 248-267 (ESEELNVESPPAAIGSSSAS) is disordered. Residues 255–267 (ESPPAAIGSSSAS) are compositionally biased toward low complexity.

Belongs to the cucumovirus movement protein family.

It localises to the host cell junction. Its subcellular location is the host plasmodesma. Its function is as follows. Transports viral genome to neighboring plant cells directly through plasmosdesmata, without any budding. The movement protein allows efficient cell to cell propagation, by bypassing the host cell wall barrier. Acts by forming a tubular structure at the host plasmodesmata, enlarging it enough to allow free passage of virion capsids. This chain is Movement protein, found in Cucumis sativus (Cucumber).